The following is a 415-amino-acid chain: Dynein assembly factor with WD repeat domains 1 (415 aa).

WD repeat units follow at residues alanine 90 to threonine 129, glycine 132 to arginine 174, glycine 175 to threonine 214, glycine 217 to threonine 256, glycine 259 to threonine 298, glycine 301 to lysine 340, glycine 343 to glutamate 384, and histidine 386 to arginine 415.

The protein belongs to the WD repeat WDR69 family. As to quaternary structure, interacts with IFT46. In terms of tissue distribution, in early mouse embryos, expression is limited to distal, motile ciliated cells of the node.

The protein localises to the cytoplasm. The protein resides in the cytoskeleton. Its subcellular location is the flagellum basal body. It localises to the flagellum axoneme. Required for axonemal dynein assembly and ciliary motility in ciliated organs, including Kupffer's vesicle, during embryogenesis. Facilitates the onset of robust cilia motility during development. The sequence is that of Dynein assembly factor with WD repeat domains 1 from Mus musculus (Mouse).